A 264-amino-acid polypeptide reads, in one-letter code: MNRTLTRDQVLALAEHIENAELDVHDIPKVTNDYPDMTFADAYDVQWEIRRRKEARGNKVVGLKMGLTSWAKMAQMGVETPIYGFLVDYFSVPDGGVVDTSKLIHPKIEAEISFVTKAPLHGPGCHIGQVLAATDFVIPTVEVIDSRYENFKFDLISVVADNASSTRFITGGQMANVADLDLRTLGVVMEKNGEVVELGAGAAVLGHPASSVAMLANLLAERGEHIPAGSFIMTGGITAAVPVAPGDNITVRYQGLCSVSARFI.

It belongs to the hydratase/decarboxylase family.

It carries out the reaction (3E)-2-oxohex-3-enedioate + H(+) = 2-oxopent-4-enoate + CO2. It participates in aromatic compound metabolism; benzoate degradation via hydroxylation. The chain is 4-oxalocrotonate decarboxylase (dmpH) from Pseudomonas sp. (strain CF600).